A 137-amino-acid polypeptide reads, in one-letter code: Transcription antitermination protein NusB (137 aa).

It belongs to the NusB family.

Its function is as follows. Involved in transcription antitermination. Required for transcription of ribosomal RNA (rRNA) genes. Binds specifically to the boxA antiterminator sequence of the ribosomal RNA (rrn) operons. This chain is Transcription antitermination protein NusB, found in Actinobacillus pleuropneumoniae serotype 5b (strain L20).